A 67-amino-acid polypeptide reads, in one-letter code: Protein Tpau_2998 (67 aa).

This Tsukamurella paurometabola (strain ATCC 8368 / DSM 20162 / CCUG 35730 / CIP 100753 / JCM 10117 / KCTC 9821 / NBRC 16120 / NCIMB 702349 / NCTC 13040) (Corynebacterium paurometabolum) protein is Protein Tpau_2998.